We begin with the raw amino-acid sequence, 284 residues long: Hemin import ATP-binding protein HmuV (284 aa).

Residues 33–266 (LGARHLSKSY…KLLSDVYSYE (234 aa)) enclose the ABC transporter domain. 65–72 (GPNGAGKS) lines the ATP pocket.

This sequence belongs to the ABC transporter superfamily. Heme (hemin) importer (TC 3.A.1.14.5) family. As to quaternary structure, the complex is composed of two ATP-binding proteins (HmuV), two transmembrane proteins (HmuU) and a solute-binding protein (HmuT).

Its subcellular location is the cell membrane. Its function is as follows. Part of the ABC transporter complex HmuTUV involved in hemin import. Responsible for energy coupling to the transport system. This Thermobifida fusca (strain YX) protein is Hemin import ATP-binding protein HmuV.